The primary structure comprises 149 residues: Large ribosomal subunit protein uL13 (149 aa).

This sequence belongs to the universal ribosomal protein uL13 family. As to quaternary structure, part of the 50S ribosomal subunit.

Functionally, this protein is one of the early assembly proteins of the 50S ribosomal subunit, although it is not seen to bind rRNA by itself. It is important during the early stages of 50S assembly. This is Large ribosomal subunit protein uL13 from Chlorobium phaeovibrioides (strain DSM 265 / 1930) (Prosthecochloris vibrioformis (strain DSM 265)).